A 509-amino-acid polypeptide reads, in one-letter code: DNA primase DnaG (509 aa).

The region spanning 167–253 is the Toprim domain; the sequence is DAIVVVEGRA…CVEDLARHEV (87 aa). Mg(2+) contacts are provided by Glu-173, Asp-215, and Asp-217. The tract at residues 267–411 is disordered; that stretch reads KQAASDDADP…ASTDEQPKTL (145 aa). Low complexity-rich tracts occupy residues 313–331 and 383–402; these read PVSS…ETAA and ESTA…AAGA.

The protein belongs to the archaeal DnaG primase family. Forms a ternary complex with MCM helicase and DNA. Mg(2+) is required as a cofactor.

It catalyses the reaction ssDNA + n NTP = ssDNA/pppN(pN)n-1 hybrid + (n-1) diphosphate.. Functionally, RNA polymerase that catalyzes the synthesis of short RNA molecules used as primers for DNA polymerase during DNA replication. In Natronomonas pharaonis (strain ATCC 35678 / DSM 2160 / CIP 103997 / JCM 8858 / NBRC 14720 / NCIMB 2260 / Gabara) (Halobacterium pharaonis), this protein is DNA primase DnaG.